Here is a 136-residue protein sequence, read N- to C-terminus: Class I hydrophobin 16 (136 aa).

The N-terminal stretch at 1-19 is a signal peptide; that stretch reads MKFTSVIALVATAATLVGA. Intrachain disulfides connect cysteine 58–cysteine 115, cysteine 65–cysteine 109, cysteine 66–cysteine 99, and cysteine 116–cysteine 129. The N-linked (GlcNAc...) asparagine glycan is linked to asparagine 74.

The protein belongs to the fungal hydrophobin family. In terms of assembly, self-assembles to form functional amyloid fibrils called rodlets. Self-assembly into fibrillar rodlets occurs spontaneously at hydrophobic:hydrophilic interfaces and the rodlets further associate laterally to form amphipathic monolayers.

The protein resides in the secreted. It is found in the cell wall. Aerial growth, conidiation, and dispersal of filamentous fungi in the environment rely upon a capability of their secreting small amphipathic proteins called hydrophobins (HPBs) with low sequence identity. Class I can self-assemble into an outermost layer of rodlet bundles on aerial cell surfaces, conferring cellular hydrophobicity that supports fungal growth, development and dispersal; whereas Class II form highly ordered films at water-air interfaces through intermolecular interactions but contribute nothing to the rodlet structure. Hydph16 is a class I hydrophobin that has specific functions in aerial mycelium formation, cell wall stress protection, and cell wall structure formation, but does not seem to be involved in mycelial hydrophobicity. Specifically functions in resisting cell wall synthesis inhibitors. The chain is Class I hydrophobin 16 from Pleurotus ostreatus (strain PC15) (Oyster mushroom).